Reading from the N-terminus, the 172-residue chain is WW domain binding protein VOPP1 (172 aa).

Positions 1 to 22 (MARPLGRVAALLLGLLMECTEA) are cleaved as a signal peptide. The Extracellular segment spans residues 23-60 (KKHCWYFEGLYPTYYICRSYEDCCGSRCCVRALSIQRL). A helical transmembrane segment spans residues 61–81 (WYFWFLLMMGVLFCCGAGFFI). Residues 82-172 (RRRMYPPPLI…PPYEQVVKDK (91 aa)) lie on the Cytoplasmic side of the membrane. The segment at 139–172 (QVQPNSPHGGTTYPPPPSYCNTPPPPYEQVVKDK) is disordered. The segment covering 151–165 (YPPPPSYCNTPPPPY) has biased composition (pro residues).

It belongs to the VOPP1/ECOP family. As to quaternary structure, interacts with WWOX (via WW domain).

The protein localises to the cytoplasmic vesicle membrane. It is found in the late endosome membrane. It localises to the lysosome membrane. Functionally, increases the transcriptional activity of NFKB1 by facilitating its nuclear translocation, DNA-binding and associated apoptotic response, when overexpressed. May sequester WWOX in lysosomal vesicles and thereby regulate WWOX role as tumor suppressor. This is WW domain binding protein VOPP1 from Rattus norvegicus (Rat).